Here is a 385-residue protein sequence, read N- to C-terminus: Leucine aminopeptidase 1 (385 aa).

An N-terminal signal peptide occupies residues Met-1–Ala-20. A propeptide spanning residues Val-21–Val-87 is cleaved from the precursor. The N-linked (GlcNAc...) asparagine glycan is linked to Asn-177. Residues His-185, Asp-204, Glu-243, and Asp-270 each coordinate Zn(2+). Cys-319 and Cys-323 are oxidised to a cystine. Residue His-352 participates in Zn(2+) binding.

This sequence belongs to the peptidase M28 family. M28E subfamily. As to quaternary structure, monomer. Zn(2+) serves as cofactor.

Its subcellular location is the secreted. Extracellular aminopeptidase that allows assimilation of proteinaceous substrates. The protein is Leucine aminopeptidase 1 (LAP1) of Ajellomyces capsulatus (strain NAm1 / WU24) (Darling's disease fungus).